The chain runs to 234 residues: Ribonuclease HII (234 aa).

Residues 47-234 (IRIAGVDEVG…KTVHKILYQE (188 aa)) enclose the RNase H type-2 domain. Residues Asp-53, Glu-54, and Asp-144 each coordinate a divalent metal cation.

The protein belongs to the RNase HII family. The cofactor is Mn(2+). Mg(2+) is required as a cofactor.

Its subcellular location is the cytoplasm. The enzyme catalyses Endonucleolytic cleavage to 5'-phosphomonoester.. Endonuclease that specifically degrades the RNA of RNA-DNA hybrids. This Ruegeria pomeroyi (strain ATCC 700808 / DSM 15171 / DSS-3) (Silicibacter pomeroyi) protein is Ribonuclease HII.